Here is a 227-residue protein sequence, read N- to C-terminus: Transmembrane emp24 domain-containing protein 1 (227 aa).

The first 23 residues, 1–23 (MMAAGAALALALWLLMPPVEVGG), serve as a signal peptide directing secretion. Residues 24–194 (AGPPPIQDGE…LQEGNLERVN (171 aa)) are Extracellular-facing. The region spanning 43–125 (KQCFYQSAPA…EKLVFFELIF (83 aa)) is the GOLD domain. A coiled-coil region spans residues 145–170 (EMLDVKMEDIKESIETMRTRLERSIQ). The helical transmembrane segment at 195-215 (FWSAVNVAVLLLVAVLQVCTL) threads the bilayer. Topologically, residues 216–227 (KRFFQDKRPVPT) are cytoplasmic. Residues 218–219 (FF) carry the COPII vesicle coat-binding motif. A COPI vesicle coat-binding motif is present at residues 218–227 (FFQDKRPVPT).

This sequence belongs to the EMP24/GP25L family. Homodimer in endoplasmic reticulum, endoplasmic reticulum-Golgi intermediate compartment and cis-Golgi network. Interacts with IL1RL1. Interacts with RNF26; this interaction is important to modulate innate immune signaling through the cGAS-STING pathway. As to expression, widely expressed.

It localises to the cell membrane. Its subcellular location is the endoplasmic reticulum membrane. It is found in the golgi apparatus. The protein localises to the cis-Golgi network membrane. The protein resides in the endoplasmic reticulum-Golgi intermediate compartment membrane. Potential role in vesicular protein trafficking, mainly in the early secretory pathway. May act as a cargo receptor at the lumenal side for incorporation of secretory cargo molecules into transport vesicles and may be involved in vesicle coat formation at the cytoplasmic side. Plays a positive role in IL-33-mediated IL-8 and IL-6 production by interacting with interleukin-33 receptor IL1RL1. Also plays a role in the modulation of innate immune signaling through the cGAS-STING pathway by interacting with RNF26. The protein is Transmembrane emp24 domain-containing protein 1 (TMED1) of Homo sapiens (Human).